A 159-amino-acid polypeptide reads, in one-letter code: Ribosomal RNA large subunit methyltransferase H (159 aa).

S-adenosyl-L-methionine-binding positions include leucine 76, glycine 108, and 127 to 132 (FGLLTL).

Belongs to the RNA methyltransferase RlmH family. Homodimer.

The protein resides in the cytoplasm. It carries out the reaction pseudouridine(1915) in 23S rRNA + S-adenosyl-L-methionine = N(3)-methylpseudouridine(1915) in 23S rRNA + S-adenosyl-L-homocysteine + H(+). Its function is as follows. Specifically methylates the pseudouridine at position 1915 (m3Psi1915) in 23S rRNA. This Streptococcus equi subsp. zooepidemicus (strain MGCS10565) protein is Ribosomal RNA large subunit methyltransferase H.